Here is a 500-residue protein sequence, read N- to C-terminus: Cobyric acid synthase (500 aa).

The GATase cobBQ-type domain maps to 253–446; sequence KIGVAAIYFP…FHGFFDRPEV (194 aa). Catalysis depends on C334, which acts as the Nucleophile. The active site involves H438.

The protein belongs to the CobB/CobQ family. CobQ subfamily.

It participates in cofactor biosynthesis; adenosylcobalamin biosynthesis. Catalyzes amidations at positions B, D, E, and G on adenosylcobyrinic A,C-diamide. NH(2) groups are provided by glutamine, and one molecule of ATP is hydrogenolyzed for each amidation. The chain is Cobyric acid synthase from Chlorobaculum tepidum (strain ATCC 49652 / DSM 12025 / NBRC 103806 / TLS) (Chlorobium tepidum).